Consider the following 248-residue polypeptide: Probable transcriptional regulatory protein FTW_1073 (248 aa).

This sequence belongs to the TACO1 family.

Its subcellular location is the cytoplasm. The sequence is that of Probable transcriptional regulatory protein FTW_1073 from Francisella tularensis subsp. tularensis (strain WY96-3418).